A 214-amino-acid chain; its full sequence is Adenylate kinase (214 aa).

10–15 (GAGKGT) contributes to the ATP binding site. The tract at residues 30–59 (STGDMFREAVASKSELGKKVEEILKRGDLV) is NMP. AMP is bound by residues Thr31, Arg36, 57–59 (DLV), 85–88 (GFPR), and Gln92. An LID region spans residues 126 to 163 (NRRICSNCGKIYNLITLPPKVDGKCDVCGGTLYQREDD). Arg127 is an ATP binding site. Zn(2+) contacts are provided by Cys130 and Cys133. 136–137 (IY) contributes to the ATP binding site. The Zn(2+) site is built by Cys150 and Cys153. AMP is bound by residues Arg160 and Arg171. Residue Leu199 coordinates ATP.

It belongs to the adenylate kinase family. As to quaternary structure, monomer.

The protein localises to the cytoplasm. The enzyme catalyses AMP + ATP = 2 ADP. Its pathway is purine metabolism; AMP biosynthesis via salvage pathway; AMP from ADP: step 1/1. Its function is as follows. Catalyzes the reversible transfer of the terminal phosphate group between ATP and AMP. Plays an important role in cellular energy homeostasis and in adenine nucleotide metabolism. This is Adenylate kinase from Thermosipho africanus (strain TCF52B).